A 214-amino-acid polypeptide reads, in one-letter code: Probable transaldolase (214 aa).

The active-site Schiff-base intermediate with substrate is the Lys-83.

It belongs to the transaldolase family. Type 3B subfamily.

The protein resides in the cytoplasm. The catalysed reaction is D-sedoheptulose 7-phosphate + D-glyceraldehyde 3-phosphate = D-erythrose 4-phosphate + beta-D-fructose 6-phosphate. The protein operates within carbohydrate degradation; pentose phosphate pathway; D-glyceraldehyde 3-phosphate and beta-D-fructose 6-phosphate from D-ribose 5-phosphate and D-xylulose 5-phosphate (non-oxidative stage): step 2/3. Its function is as follows. Transaldolase is important for the balance of metabolites in the pentose-phosphate pathway. This chain is Probable transaldolase, found in Dictyoglomus turgidum (strain DSM 6724 / Z-1310).